The primary structure comprises 244 residues: Small ribosomal subunit protein uS3 (244 aa).

Residues 39-107 (VREMLRKKLA…PAHINVTEVR (69 aa)) enclose the KH type-2 domain. The disordered stretch occupies residues 213 to 244 (VGQEKQDDSPRNDRNDRGDRGDRPSRPAREAR). The span at 216–244 (EKQDDSPRNDRNDRGDRGDRPSRPAREAR) shows a compositional bias: basic and acidic residues.

It belongs to the universal ribosomal protein uS3 family. In terms of assembly, part of the 30S ribosomal subunit. Forms a tight complex with proteins S10 and S14.

Its function is as follows. Binds the lower part of the 30S subunit head. Binds mRNA in the 70S ribosome, positioning it for translation. The polypeptide is Small ribosomal subunit protein uS3 (Xanthomonas oryzae pv. oryzae (strain MAFF 311018)).